We begin with the raw amino-acid sequence, 172 residues long: Translation initiation factor IF-3 (172 aa).

The protein belongs to the IF-3 family. In terms of assembly, monomer.

The protein resides in the cytoplasm. In terms of biological role, IF-3 binds to the 30S ribosomal subunit and shifts the equilibrium between 70S ribosomes and their 50S and 30S subunits in favor of the free subunits, thus enhancing the availability of 30S subunits on which protein synthesis initiation begins. This is Translation initiation factor IF-3 from Sulfurimonas denitrificans (strain ATCC 33889 / DSM 1251) (Thiomicrospira denitrificans (strain ATCC 33889 / DSM 1251)).